Consider the following 89-residue polypeptide: Small ribosomal subunit protein uS15 (89 aa).

It belongs to the universal ribosomal protein uS15 family. Part of the 30S ribosomal subunit. Forms a bridge to the 50S subunit in the 70S ribosome, contacting the 23S rRNA.

In terms of biological role, one of the primary rRNA binding proteins, it binds directly to 16S rRNA where it helps nucleate assembly of the platform of the 30S subunit by binding and bridging several RNA helices of the 16S rRNA. Its function is as follows. Forms an intersubunit bridge (bridge B4) with the 23S rRNA of the 50S subunit in the ribosome. The protein is Small ribosomal subunit protein uS15 of Rippkaea orientalis (strain PCC 8801 / RF-1) (Cyanothece sp. (strain PCC 8801)).